The chain runs to 628 residues: MAYQAGEFDVIVIGAGHAGIEASLAAARMGSKTVMLTMNPDMVGFMYCNPSIGGPAKGIVVREIDALGGEMARAIDATYIQMKMLNTSKGPAVRALRAQADKFEYQNRMKKALEDEPNLLLRQALVERLIIEDDTCVGVVTNTGAEYRAKAVIITTGTFMRGKIIIGELSYESGPNNQMPSVNLSKHLEELGFELARFKTGTPPRIDGKTIDYSKTEIQPGDAVALPFSHETTQMITEQIPCWLTYTTEYTHQLIDANLHRSPMFSGMIKGTGPRYCPSIEDKVVRFSDKPRHQIFLEPEGRDTEEVYVQGLSTSLPEDVQHDILRSIPGLEKSEMMRPGYAIEYDAVVPTQLWPTLETKRIAGLFTAGQINGTSGYEEAAGQGIMAGINAALKVQERDPLILSRSQGYIGVMIDDLVTKGTNEPYRLLTSRAEYRLLLRHDNADLRLSDIGYDLGLINETRHAKLAEKKEDIQREMKRLEKVVIKATSEVNERLTEIGVSPLKEALHAITLLKRPEITYAMIADMTPPPVALSEEAAEQVEIQVKYAGYIDKQLDQVERMMRMEKKRIPERLDYDVISGLAIEAKQKLNQVRPLSIGQASRISGVNPSDISILLVYIEQGQYALTAE.

Residues 14–19 (GAGHAG), valine 126, and serine 181 each bind FAD. 273–287 (GPRYCPSIEDKVVRF) contacts NAD(+). Position 370 (glutamine 370) interacts with FAD.

It belongs to the MnmG family. Homodimer. Heterotetramer of two MnmE and two MnmG subunits. Requires FAD as cofactor.

The protein localises to the cytoplasm. Its function is as follows. NAD-binding protein involved in the addition of a carboxymethylaminomethyl (cmnm) group at the wobble position (U34) of certain tRNAs, forming tRNA-cmnm(5)s(2)U34. This chain is tRNA uridine 5-carboxymethylaminomethyl modification enzyme MnmG, found in Exiguobacterium sibiricum (strain DSM 17290 / CCUG 55495 / CIP 109462 / JCM 13490 / 255-15).